We begin with the raw amino-acid sequence, 367 residues long: tRNA-specific 2-thiouridylase MnmA (367 aa).

ATP contacts are provided by residues 9–16 (GLSGGVDS) and M35. The interaction with target base in tRNA stretch occupies residues 95 to 97 (NPD). C100 acts as the Nucleophile in catalysis. A disulfide bond links C100 and C196. G124 contacts ATP. Residues 146-148 (KDQ) are interaction with tRNA. C196 (cysteine persulfide intermediate) is an active-site residue. The segment at 308 to 309 (RY) is interaction with tRNA.

It belongs to the MnmA/TRMU family.

Its subcellular location is the cytoplasm. It carries out the reaction S-sulfanyl-L-cysteinyl-[protein] + uridine(34) in tRNA + AH2 + ATP = 2-thiouridine(34) in tRNA + L-cysteinyl-[protein] + A + AMP + diphosphate + H(+). In terms of biological role, catalyzes the 2-thiolation of uridine at the wobble position (U34) of tRNA, leading to the formation of s(2)U34. The sequence is that of tRNA-specific 2-thiouridylase MnmA from Nitrosococcus oceani (strain ATCC 19707 / BCRC 17464 / JCM 30415 / NCIMB 11848 / C-107).